A 94-amino-acid chain; its full sequence is MPSVNNYFENKVTSIAFQTATKPATVGVMEIGEYEFGTSEFETMSVVSGALTVKLPESDEWQTFNAGEQFTIEANQKFQVKVEVESAYLCTYGK.

It belongs to the nucleoside phosphorylase PpnP family.

It carries out the reaction a purine D-ribonucleoside + phosphate = a purine nucleobase + alpha-D-ribose 1-phosphate. The catalysed reaction is adenosine + phosphate = alpha-D-ribose 1-phosphate + adenine. It catalyses the reaction cytidine + phosphate = cytosine + alpha-D-ribose 1-phosphate. The enzyme catalyses guanosine + phosphate = alpha-D-ribose 1-phosphate + guanine. It carries out the reaction inosine + phosphate = alpha-D-ribose 1-phosphate + hypoxanthine. The catalysed reaction is thymidine + phosphate = 2-deoxy-alpha-D-ribose 1-phosphate + thymine. It catalyses the reaction uridine + phosphate = alpha-D-ribose 1-phosphate + uracil. The enzyme catalyses xanthosine + phosphate = alpha-D-ribose 1-phosphate + xanthine. Catalyzes the phosphorolysis of diverse nucleosides, yielding D-ribose 1-phosphate and the respective free bases. Can use uridine, adenosine, guanosine, cytidine, thymidine, inosine and xanthosine as substrates. Also catalyzes the reverse reactions. This is Pyrimidine/purine nucleoside phosphorylase 2 from Psychrobacter cryohalolentis (strain ATCC BAA-1226 / DSM 17306 / VKM B-2378 / K5).